The primary structure comprises 197 residues: 3-isopropylmalate dehydratase small subunit (197 aa).

It belongs to the LeuD family. LeuD type 1 subfamily. In terms of assembly, heterodimer of LeuC and LeuD.

It carries out the reaction (2R,3S)-3-isopropylmalate = (2S)-2-isopropylmalate. Its pathway is amino-acid biosynthesis; L-leucine biosynthesis; L-leucine from 3-methyl-2-oxobutanoate: step 2/4. Its function is as follows. Catalyzes the isomerization between 2-isopropylmalate and 3-isopropylmalate, via the formation of 2-isopropylmaleate. The polypeptide is 3-isopropylmalate dehydratase small subunit (Shouchella clausii (strain KSM-K16) (Alkalihalobacillus clausii)).